The following is an 86-amino-acid chain: Large ribosomal subunit protein bL27 (86 aa).

Positions 1–10 are enriched in gly residues; it reads MAQKKGGGST. Residues 1–21 are disordered; that stretch reads MAQKKGGGSTRNGRDSESKRL.

It belongs to the bacterial ribosomal protein bL27 family.

This chain is Large ribosomal subunit protein bL27, found in Bordetella petrii (strain ATCC BAA-461 / DSM 12804 / CCUG 43448).